Reading from the N-terminus, the 468-residue chain is DNA polymerase IV 1 (468 aa).

Positions 6-188 (VLHLDMDAFF…LPVRRLWGIG (183 aa)) constitute a UmuC domain. The Mg(2+) site is built by Asp10 and Asp105. Residue Glu106 is part of the active site.

This sequence belongs to the DNA polymerase type-Y family. In terms of assembly, monomer. Requires Mg(2+) as cofactor.

It localises to the cytoplasm. It catalyses the reaction DNA(n) + a 2'-deoxyribonucleoside 5'-triphosphate = DNA(n+1) + diphosphate. Functionally, poorly processive, error-prone DNA polymerase involved in untargeted mutagenesis. Copies undamaged DNA at stalled replication forks, which arise in vivo from mismatched or misaligned primer ends. These misaligned primers can be extended by PolIV. Exhibits no 3'-5' exonuclease (proofreading) activity. May be involved in translesional synthesis, in conjunction with the beta clamp from PolIII. The polypeptide is DNA polymerase IV 1 (dinB1) (Mycobacterium tuberculosis (strain CDC 1551 / Oshkosh)).